The following is a 243-amino-acid chain: Zinc import ATP-binding protein ZnuC (243 aa).

One can recognise an ABC transporter domain in the interval 25–242; it reads LVVDSITLFY…AKFMSVFPEN (218 aa). Position 57 to 64 (57 to 64) interacts with ATP; sequence GPNGGGKT.

It belongs to the ABC transporter superfamily. Zinc importer (TC 3.A.1.15.5) family. The complex is composed of two ATP-binding proteins (ZnuC), two transmembrane proteins (ZnuB) and a solute-binding protein (ZnuA).

The protein resides in the cell inner membrane. The enzyme catalyses Zn(2+)(out) + ATP(in) + H2O(in) = Zn(2+)(in) + ADP(in) + phosphate(in) + H(+)(in). Functionally, part of the ABC transporter complex ZnuABC involved in zinc import. Responsible for energy coupling to the transport system. This Anaplasma phagocytophilum (strain HZ) protein is Zinc import ATP-binding protein ZnuC.